The sequence spans 191 residues: dCTP deaminase, dUMP-forming (191 aa).

DCTP-binding positions include 101–106 (KSSLGR), aspartate 119, 127–129 (TLE), glutamine 148, tyrosine 162, and glutamine 174. Catalysis depends on glutamate 129, which acts as the Proton donor/acceptor. The disordered stretch occupies residues 163–191 (GSPVYGSRYQGQRGPTPSRSWQNFHRTKI). The span at 171–191 (YQGQRGPTPSRSWQNFHRTKI) shows a compositional bias: polar residues.

The protein belongs to the dCTP deaminase family. As to quaternary structure, homotrimer.

It carries out the reaction dCTP + 2 H2O = dUMP + NH4(+) + diphosphate. Its pathway is pyrimidine metabolism; dUMP biosynthesis; dUMP from dCTP: step 1/1. Bifunctional enzyme that catalyzes both the deamination of dCTP to dUTP and the hydrolysis of dUTP to dUMP without releasing the toxic dUTP intermediate. The chain is dCTP deaminase, dUMP-forming from Acidothermus cellulolyticus (strain ATCC 43068 / DSM 8971 / 11B).